Reading from the N-terminus, the 43-residue chain is Protein PsbN (43 aa).

A helical transmembrane segment spans residues 5-27; it reads TLVAIFISGSLVSFTGYALYTAF.

The protein belongs to the PsbN family.

The protein resides in the plastid. The protein localises to the chloroplast thylakoid membrane. In terms of biological role, may play a role in photosystem I and II biogenesis. In Nelumbo lutea (American lotus), this protein is Protein PsbN.